Here is a 229-residue protein sequence, read N- to C-terminus: GTP-binding protein Di-Ras3 (229 aa).

GTP is bound by residues 44–51 (GTAGVGKS), 63–69 (RHEYLPT), 91–95 (DSKSG), 152–155 (NKSD), and 182–183 (AK). The short motif at 66–74 (YLPTIENTY) is the Effector region element. Cysteine methyl ester is present on cysteine 226. Cysteine 226 carries the S-geranylgeranyl cysteine lipid modification. Residues 227–229 (IIM) constitute a propeptide, removed in mature form.

It belongs to the small GTPase superfamily. Di-Ras family. As to expression, expressed in normal ovarian and breast epithelial cells but not in ovarian and breast cancers.

It localises to the cell membrane. In Homo sapiens (Human), this protein is GTP-binding protein Di-Ras3 (DIRAS3).